The primary structure comprises 164 residues: uncharacterized protein (164 aa).

Residues 107–136 (QSESGGSGSNSRSSSDTTEPTDPPAPVRKT) form a disordered region.

This is an uncharacterized protein from Escherichia coli (Bacteriophage T4).